The chain runs to 148 residues: U5-hexatoxin-Hi1a (148 aa).

Residues 1 to 21 form the signal peptide; that stretch reads MNFSVVAVALVVVLTVHFTDG. The propeptide occupies 22 to 38; the sequence is QETSSSLPSPPSPLPGR. Residues 125–148 form a disordered region; the sequence is TPSTTVTTPTPTTETPTTETPSTP.

Contains 2 disulfide bonds. As to expression, expressed by the venom gland.

The protein localises to the secreted. Probable ion channel inhibitor. The polypeptide is U5-hexatoxin-Hi1a (Hadronyche infensa (Fraser island funnel-web spider)).